We begin with the raw amino-acid sequence, 120 residues long: NAD(P)H-quinone oxidoreductase subunit 3, chloroplastic (120 aa).

3 helical membrane-spanning segments follow: residues 9-29 (IFWA…LISG), 64-84 (MFAL…PWAM), and 88-108 (VLGV…IVGS).

The protein belongs to the complex I subunit 3 family. In terms of assembly, NDH is composed of at least 16 different subunits, 5 of which are encoded in the nucleus.

The protein resides in the plastid. The protein localises to the chloroplast thylakoid membrane. It carries out the reaction a plastoquinone + NADH + (n+1) H(+)(in) = a plastoquinol + NAD(+) + n H(+)(out). It catalyses the reaction a plastoquinone + NADPH + (n+1) H(+)(in) = a plastoquinol + NADP(+) + n H(+)(out). In terms of biological role, NDH shuttles electrons from NAD(P)H:plastoquinone, via FMN and iron-sulfur (Fe-S) centers, to quinones in the photosynthetic chain and possibly in a chloroplast respiratory chain. The immediate electron acceptor for the enzyme in this species is believed to be plastoquinone. Couples the redox reaction to proton translocation, and thus conserves the redox energy in a proton gradient. This is NAD(P)H-quinone oxidoreductase subunit 3, chloroplastic from Buxus microphylla (Littleleaf boxwood).